The following is a 471-amino-acid chain: ATP synthase subunit beta (471 aa).

154 to 161 (GGAGVGKT) contributes to the ATP binding site.

The protein belongs to the ATPase alpha/beta chains family. In terms of assembly, F-type ATPases have 2 components, CF(1) - the catalytic core - and CF(0) - the membrane proton channel. CF(1) has five subunits: alpha(3), beta(3), gamma(1), delta(1), epsilon(1). CF(0) has three main subunits: a(1), b(2) and c(9-12). The alpha and beta chains form an alternating ring which encloses part of the gamma chain. CF(1) is attached to CF(0) by a central stalk formed by the gamma and epsilon chains, while a peripheral stalk is formed by the delta and b chains.

It is found in the cell membrane. It catalyses the reaction ATP + H2O + 4 H(+)(in) = ADP + phosphate + 5 H(+)(out). Functionally, produces ATP from ADP in the presence of a proton gradient across the membrane. The catalytic sites are hosted primarily by the beta subunits. The chain is ATP synthase subunit beta from Mesomycoplasma hyopneumoniae (strain 232) (Mycoplasma hyopneumoniae).